The following is a 244-amino-acid chain: Large ribosomal subunit protein uL2 (244 aa).

Composition is skewed to basic residues over residues 1-12 and 234-244; these read MGKRPLVRRRGR and KTGRARIKERK. Disordered stretches follow at residues 1-30 and 203-244; these read MGKRPLVRRRGRGGNQFRSTSTGKVGTKAN and HGGG…KERK.

Belongs to the universal ribosomal protein uL2 family. Part of the 50S ribosomal subunit. Forms a bridge to the 30S subunit in the 70S ribosome.

Functionally, one of the primary rRNA binding proteins. Required for association of the 30S and 50S subunits to form the 70S ribosome, for tRNA binding and peptide bond formation. It has been suggested to have peptidyltransferase activity; this is somewhat controversial. Makes several contacts with the 16S rRNA in the 70S ribosome. In Nitrosopumilus maritimus (strain SCM1), this protein is Large ribosomal subunit protein uL2.